A 605-amino-acid polypeptide reads, in one-letter code: Replication and transcription activator (605 aa).

Disordered regions lie at residues 307 to 381 and 447 to 501; these read SLPS…EPEQ and RIRP…TPEA. The segment covering 321–338 has biased composition (low complexity); sequence SADCGDSSSSSSDSGNSD. Basic and acidic residues predominate over residues 341-353; it reads QSEREEARAEAPR. Basic residues predominate over residues 355–364; the sequence is RAPKSRRTSR.

Belongs to the herpesviridae Rta family. Interacts with human ATF7IP protein, leading to promote and regulate host genes in virus-infected cells. Interacts with RNA polymerase III complex; this interaction downregulates small RNA transcription and 5'-pppRNA production.

The protein resides in the host nucleus. The protein localises to the virion tegument. In terms of biological role, immediate-early transcription factor that controls the initiation of viral lytic gene expression and lytic reactivation from latency. Triggers lytic replication, and initiates a cellular senescence program in epithelial cells. Up-regulates human DCR3/TNFRSF6B by directly binding to its receptor. Globally induces a proteasome-dependent loss of SUMOylated proteins in the host cell and the loss of promeylocytic leukemia nuclear bodies. Improves the stability of the triplex capsid protein TRX1 by reducing the ubiquitination level of the latter. Mediates evasion of inflammasome activation and antiviral responses (T- and NK cell activation) during EBV early lytic infection. This chain is Replication and transcription activator, found in Epstein-Barr virus (strain GD1) (HHV-4).